The following is a 193-amino-acid chain: dCTP deaminase (193 aa).

Residues 110–115, aspartate 128, 136–138, tyrosine 171, lysine 178, and glutamine 182 each bind dCTP; these read RSSLAR and VLE. Glutamate 138 (proton donor/acceptor) is an active-site residue. The disordered stretch occupies residues 169–193; that stretch reads RPYNRRQDAKYKDQQGAVASRIDKD.

Belongs to the dCTP deaminase family. As to quaternary structure, homotrimer.

The catalysed reaction is dCTP + H2O + H(+) = dUTP + NH4(+). It participates in pyrimidine metabolism; dUMP biosynthesis; dUMP from dCTP (dUTP route): step 1/2. Its function is as follows. Catalyzes the deamination of dCTP to dUTP. This chain is dCTP deaminase, found in Pectobacterium atrosepticum (strain SCRI 1043 / ATCC BAA-672) (Erwinia carotovora subsp. atroseptica).